Reading from the N-terminus, the 61-residue chain is Defensin-like peptide TXKs2 (61 aa).

The signal sequence occupies residues 1–19 (MTYAILIIVSLLLISDRIS). Residues 20 to 22 (NVV) constitute a propeptide that is removed on maturation. Cystine bridges form between cysteine 26-cysteine 47, cysteine 33-cysteine 56, and cysteine 37-cysteine 58.

It belongs to the invertebrate defensin family. In terms of tissue distribution, expressed by the venom gland.

It localises to the secreted. Functionally, antibacterial protein. The chain is Defensin-like peptide TXKs2 from Olivierus martensii (Manchurian scorpion).